Here is a 344-residue protein sequence, read N- to C-terminus: Dihydroorotase (344 aa).

Positions 13 and 15 each coordinate Zn(2+). Residues 15 to 17 (HLR) and Asn-41 contribute to the substrate site. Residues Lys-98, His-135, and His-173 each coordinate Zn(2+). Position 98 is an N6-carboxylysine (Lys-98). A substrate-binding site is contributed by His-135. Position 218 (Leu-218) interacts with substrate. Asp-247 lines the Zn(2+) pocket. The active site involves Asp-247. Substrate is bound by residues His-251 and Ala-263.

It belongs to the metallo-dependent hydrolases superfamily. DHOase family. Class II DHOase subfamily. As to quaternary structure, homodimer. Requires Zn(2+) as cofactor.

It carries out the reaction (S)-dihydroorotate + H2O = N-carbamoyl-L-aspartate + H(+). Its pathway is pyrimidine metabolism; UMP biosynthesis via de novo pathway; (S)-dihydroorotate from bicarbonate: step 3/3. In terms of biological role, catalyzes the reversible cyclization of carbamoyl aspartate to dihydroorotate. In Neisseria gonorrhoeae (strain NCCP11945), this protein is Dihydroorotase.